An 84-amino-acid polypeptide reads, in one-letter code: Small ribosomal subunit protein bS16 (84 aa).

This sequence belongs to the bacterial ribosomal protein bS16 family.

The protein is Small ribosomal subunit protein bS16 of Thioalkalivibrio sulfidiphilus (strain HL-EbGR7).